The chain runs to 491 residues: Cholesterol 22-monohydroxylase CYP90B51 (491 aa).

The helical transmembrane segment at 6-26 (ITFYCLSSILSVLLIFIFILI) threads the bilayer. Cys437 contributes to the heme binding site.

The protein belongs to the cytochrome P450 family. In terms of tissue distribution, mainly expressed in leaves and seed pods and, to a lower extent, in flowers and stems.

It is found in the membrane. It catalyses the reaction cholesterol + reduced [NADPH--hemoprotein reductase] + O2 = (22S)-22-hydroxycholesterol + oxidized [NADPH--hemoprotein reductase] + H2O + H(+). It participates in steroid metabolism; cholesterol metabolism. In terms of biological role, canonical brassinosteroid (BR)-biosynthetic enzyme capable of converting cholesterol to 22S-hydroxycholesterol via sterol-C22 hydroxylation. In Trigonella foenum-graecum (Fenugreek), this protein is Cholesterol 22-monohydroxylase CYP90B51.